Consider the following 92-residue polypeptide: PqqA binding protein (92 aa).

It belongs to the PqqD family. In terms of assembly, monomer. Interacts with PqqE.

The protein operates within cofactor biosynthesis; pyrroloquinoline quinone biosynthesis. Its function is as follows. Functions as a PqqA binding protein and presents PqqA to PqqE, in the pyrroloquinoline quinone (PQQ) biosynthetic pathway. This chain is PqqA binding protein, found in Pseudomonas aeruginosa (strain UCBPP-PA14).